A 153-amino-acid polypeptide reads, in one-letter code: ATP synthase subunit b' (153 aa).

Residues 23-40 (LMAIQVVALTYILNSLFF) traverse the membrane as a helical segment.

It belongs to the ATPase B chain family. F-type ATPases have 2 components, F(1) - the catalytic core - and F(0) - the membrane proton channel. F(1) has five subunits: alpha(3), beta(3), gamma(1), delta(1), epsilon(1). F(0) has four main subunits: a(1), b(1), b'(1) and c(10-14). The alpha and beta chains form an alternating ring which encloses part of the gamma chain. F(1) is attached to F(0) by a central stalk formed by the gamma and epsilon chains, while a peripheral stalk is formed by the delta, b and b' chains.

It is found in the cellular thylakoid membrane. Its function is as follows. F(1)F(0) ATP synthase produces ATP from ADP in the presence of a proton or sodium gradient. F-type ATPases consist of two structural domains, F(1) containing the extramembraneous catalytic core and F(0) containing the membrane proton channel, linked together by a central stalk and a peripheral stalk. During catalysis, ATP synthesis in the catalytic domain of F(1) is coupled via a rotary mechanism of the central stalk subunits to proton translocation. In terms of biological role, component of the F(0) channel, it forms part of the peripheral stalk, linking F(1) to F(0). The b'-subunit is a diverged and duplicated form of b found in plants and photosynthetic bacteria. This Prochlorococcus marinus (strain MIT 9312) protein is ATP synthase subunit b'.